The sequence spans 167 residues: Ribosome maturation factor RimM (167 aa).

One can recognise a PRC barrel domain in the interval 94 to 165; sequence ENEFYYSDII…KIIITPMEGL (72 aa).

This sequence belongs to the RimM family. As to quaternary structure, binds ribosomal protein uS19.

It localises to the cytoplasm. In terms of biological role, an accessory protein needed during the final step in the assembly of 30S ribosomal subunit, possibly for assembly of the head region. Essential for efficient processing of 16S rRNA. May be needed both before and after RbfA during the maturation of 16S rRNA. It has affinity for free ribosomal 30S subunits but not for 70S ribosomes. This chain is Ribosome maturation factor RimM, found in Staphylococcus aureus (strain NCTC 8325 / PS 47).